The sequence spans 240 residues: tRNA (guanine-N(7)-)-methyltransferase (240 aa).

A compositionally biased stretch (polar residues) spans Met-1–Thr-10. Residues Met-1–Arg-20 are disordered. 4 residues coordinate S-adenosyl-L-methionine: Glu-70, Glu-95, Asp-122, and Asp-145. Asp-145 is an active-site residue. Residues Lys-149, Asp-181, and Thr-218–Glu-221 each bind substrate.

This sequence belongs to the class I-like SAM-binding methyltransferase superfamily. TrmB family.

It catalyses the reaction guanosine(46) in tRNA + S-adenosyl-L-methionine = N(7)-methylguanosine(46) in tRNA + S-adenosyl-L-homocysteine. It participates in tRNA modification; N(7)-methylguanine-tRNA biosynthesis. In terms of biological role, catalyzes the formation of N(7)-methylguanine at position 46 (m7G46) in tRNA. The polypeptide is tRNA (guanine-N(7)-)-methyltransferase (Pseudomonas putida (strain W619)).